The sequence spans 352 residues: Anthranilate phosphoribosyltransferase (352 aa).

Residues Gly-94, 97 to 98 (GS), Ser-102, 104 to 107 (NIST), 122 to 130 (KHGNRAVSS), and Ser-134 each bind 5-phospho-alpha-D-ribose 1-diphosphate. An anthranilate-binding site is contributed by Gly-94. Ser-106 provides a ligand contact to Mg(2+). Residue Asn-125 coordinates anthranilate. Anthranilate is bound at residue Arg-180. Residues Asp-239 and Glu-240 each coordinate Mg(2+).

The protein belongs to the anthranilate phosphoribosyltransferase family. Homodimer. Requires Mg(2+) as cofactor.

It carries out the reaction N-(5-phospho-beta-D-ribosyl)anthranilate + diphosphate = 5-phospho-alpha-D-ribose 1-diphosphate + anthranilate. It functions in the pathway amino-acid biosynthesis; L-tryptophan biosynthesis; L-tryptophan from chorismate: step 2/5. Functionally, catalyzes the transfer of the phosphoribosyl group of 5-phosphorylribose-1-pyrophosphate (PRPP) to anthranilate to yield N-(5'-phosphoribosyl)-anthranilate (PRA). The chain is Anthranilate phosphoribosyltransferase from Geobacter sp. (strain M21).